The sequence spans 158 residues: NADH-quinone oxidoreductase subunit B 2 (158 aa).

Residues C37, C38, C102, and C132 each contribute to the [4Fe-4S] cluster site.

It belongs to the complex I 20 kDa subunit family. As to quaternary structure, NDH-1 is composed of 14 different subunits. Subunits NuoB, C, D, E, F, and G constitute the peripheral sector of the complex. [4Fe-4S] cluster is required as a cofactor.

The protein localises to the cell inner membrane. The catalysed reaction is a quinone + NADH + 5 H(+)(in) = a quinol + NAD(+) + 4 H(+)(out). Functionally, NDH-1 shuttles electrons from NADH, via FMN and iron-sulfur (Fe-S) centers, to quinones in the respiratory chain. Couples the redox reaction to proton translocation (for every two electrons transferred, four hydrogen ions are translocated across the cytoplasmic membrane), and thus conserves the redox energy in a proton gradient. This is NADH-quinone oxidoreductase subunit B 2 from Acidithiobacillus ferrooxidans (strain ATCC 53993 / BNL-5-31) (Leptospirillum ferrooxidans (ATCC 53993)).